A 196-amino-acid chain; its full sequence is Dephospho-CoA kinase (196 aa).

Residues 5 to 196 (IIGLTGGIAT…QVDIALNFEL (192 aa)) enclose the DPCK domain. 13–18 (ATGKTT) serves as a coordination point for ATP.

The protein belongs to the CoaE family.

It localises to the cytoplasm. The enzyme catalyses 3'-dephospho-CoA + ATP = ADP + CoA + H(+). It functions in the pathway cofactor biosynthesis; coenzyme A biosynthesis; CoA from (R)-pantothenate: step 5/5. In terms of biological role, catalyzes the phosphorylation of the 3'-hydroxyl group of dephosphocoenzyme A to form coenzyme A. This is Dephospho-CoA kinase from Trichormus variabilis (strain ATCC 29413 / PCC 7937) (Anabaena variabilis).